Consider the following 360-residue polypeptide: MKSSIVAKLEALQERHEEVLAYLGDASVIADQDRFRALSREYAQLTDVTRCFKEWRSAQDDIEAAEMMLDDLEMREMAQEELKIAKARSEELEQQLQVLLLPKDPDDERDCFLEIRAGTGGDEAAIFAGDMFRMYSRYAETRRWKVEIMSASEGEHGGYKEIIAKISGDGVFGQLKFESGGHRVQRVPETESQGRIHTSACTVAVMPAIPEAELPEINAGDLRIDTFRSSGAGGQHVNTTDSAIRITHIPTGIVVECQDERSQHKNKAKAMSVLGARIRAAEMQKRQLAEASERRNLLGTGDRSDRNRTYNFPQGRVTDHRINLTLYRLDEVMEGKLDMLIQPIVQEYQADQLSALSEQD.

At Gln-235 the chain carries N5-methylglutamine. Residues 291 to 308 (ASERRNLLGTGDRSDRNR) show a composition bias toward basic and acidic residues. The disordered stretch occupies residues 291 to 312 (ASERRNLLGTGDRSDRNRTYNF).

It belongs to the prokaryotic/mitochondrial release factor family. Methylated by PrmC. Methylation increases the termination efficiency of RF1.

It is found in the cytoplasm. In terms of biological role, peptide chain release factor 1 directs the termination of translation in response to the peptide chain termination codons UAG and UAA. This is Peptide chain release factor 1 from Yersinia pseudotuberculosis serotype O:1b (strain IP 31758).